A 264-amino-acid polypeptide reads, in one-letter code: 3-methyl-2-oxobutanoate hydroxymethyltransferase (264 aa).

Residues aspartate 45 and aspartate 84 each contribute to the Mg(2+) site. Residues 45–46, aspartate 84, and lysine 112 each bind 3-methyl-2-oxobutanoate; that span reads DS. Glutamate 114 is a Mg(2+) binding site. Glutamate 181 (proton acceptor) is an active-site residue.

It belongs to the PanB family. Homodecamer; pentamer of dimers. Mg(2+) serves as cofactor.

The protein localises to the cytoplasm. The catalysed reaction is 3-methyl-2-oxobutanoate + (6R)-5,10-methylene-5,6,7,8-tetrahydrofolate + H2O = 2-dehydropantoate + (6S)-5,6,7,8-tetrahydrofolate. It participates in cofactor biosynthesis; (R)-pantothenate biosynthesis; (R)-pantoate from 3-methyl-2-oxobutanoate: step 1/2. Catalyzes the reversible reaction in which hydroxymethyl group from 5,10-methylenetetrahydrofolate is transferred onto alpha-ketoisovalerate to form ketopantoate. The protein is 3-methyl-2-oxobutanoate hydroxymethyltransferase of Escherichia coli (strain K12 / MC4100 / BW2952).